Here is a 400-residue protein sequence, read N- to C-terminus: Probable peptidoglycan glycosyltransferase FtsW (400 aa).

11 helical membrane passes run 30 to 50 (LSVLALLGLGLVMVASASIGI), 65 to 84 (QAAYVVLGLAAASLAYRIRL), 92 to 112 (GLLLGFAYFLLILVLVPGVGV), 123 to 143 (LGLFNLQVSEVAKLLFTLYLA), 157 to 177 (FAGFLRPMLLLSGAALLLLME), 179 to 199 (DFGAAVVLMAIGLALLFLAGA), 201 to 221 (LWQFALLVGTVAAALAMLAIT), 247 to 267 (TQSLIAIGSGSWFGVGLGASV), 280 to 300 (FLFAVLAEELGLVGITVVVLL), 321 to 341 (LFGAYLAYGVGVWVSLQAFIN), and 356 to 376 (LPLMSYGGSSMLMTCAAVGLL).

It belongs to the SEDS family. FtsW subfamily.

Its subcellular location is the cell inner membrane. The catalysed reaction is [GlcNAc-(1-&gt;4)-Mur2Ac(oyl-L-Ala-gamma-D-Glu-L-Lys-D-Ala-D-Ala)](n)-di-trans,octa-cis-undecaprenyl diphosphate + beta-D-GlcNAc-(1-&gt;4)-Mur2Ac(oyl-L-Ala-gamma-D-Glu-L-Lys-D-Ala-D-Ala)-di-trans,octa-cis-undecaprenyl diphosphate = [GlcNAc-(1-&gt;4)-Mur2Ac(oyl-L-Ala-gamma-D-Glu-L-Lys-D-Ala-D-Ala)](n+1)-di-trans,octa-cis-undecaprenyl diphosphate + di-trans,octa-cis-undecaprenyl diphosphate + H(+). It participates in cell wall biogenesis; peptidoglycan biosynthesis. Its function is as follows. Peptidoglycan polymerase that is essential for cell division. In Thioalkalivibrio sulfidiphilus (strain HL-EbGR7), this protein is Probable peptidoglycan glycosyltransferase FtsW.